Reading from the N-terminus, the 336-residue chain is Ferredoxin--NADP reductase 1 (336 aa).

7 residues coordinate FAD: E37, K45, F50, V90, L125, D287, and T328.

The protein belongs to the ferredoxin--NADP reductase type 2 family. In terms of assembly, homodimer. FAD is required as a cofactor.

The catalysed reaction is 2 reduced [2Fe-2S]-[ferredoxin] + NADP(+) + H(+) = 2 oxidized [2Fe-2S]-[ferredoxin] + NADPH. In Bacillus subtilis (strain 168), this protein is Ferredoxin--NADP reductase 1 (ycgT).